A 131-amino-acid chain; its full sequence is uncharacterized protein (131 aa).

Positions Met16 to Gly71 are disordered. Residues Glu20 to Asp33 are compositionally biased toward acidic residues.

This is an uncharacterized protein from Dictyostelium discoideum (Social amoeba).